The chain runs to 648 residues: Threonine--tRNA ligase (648 aa).

Positions 1-63 (MAQISLTFPD…TQDAAIAIHT (63 aa)) constitute a TGS domain. The tract at residues 247-544 (DHRKLGREMN…LIEEHAGKLP (298 aa)) is catalytic. Residues Cys344, His395, and His521 each contribute to the Zn(2+) site.

This sequence belongs to the class-II aminoacyl-tRNA synthetase family. In terms of assembly, homodimer. It depends on Zn(2+) as a cofactor.

It is found in the cytoplasm. It carries out the reaction tRNA(Thr) + L-threonine + ATP = L-threonyl-tRNA(Thr) + AMP + diphosphate + H(+). Functionally, catalyzes the attachment of threonine to tRNA(Thr) in a two-step reaction: L-threonine is first activated by ATP to form Thr-AMP and then transferred to the acceptor end of tRNA(Thr). Also edits incorrectly charged L-seryl-tRNA(Thr). The sequence is that of Threonine--tRNA ligase from Ruegeria sp. (strain TM1040) (Silicibacter sp.).